The primary structure comprises 862 residues: MAGEERPERIVVSVRLRPVNAREAERGDGSDWECAGPTTLTFRGAVPERAMFPASYSYDRVFSHECGTRQVYDEGARQVAMSVLSGINASIFAYGQTSSGKTYTMVGITEYSMSDIYDYIEKHPEREFILKFSAMEIYNEAVRDLLSSDATPLRLLDDPEKGTVVEKLTEETLRDKGHLLELLAVCEAQRQIGETAMNEASSRSHQILRMTVESSAKQFLGKGNSSTLIACVNFVDLAGSERASQTASAGMRLKEGSHINRSLLTLGKVIRQLSKGRNGHIPYRDSKLTRILQSSLGGNARTAIICTMSPAHCHIEQSRNTLLFANCAKDVVTNAQVNVVMSDKALVKHLQREIARLENELKFPASASCTSHAEILREKDELIKNLEEQLKELMEQKDTVQSQLDNFRKVASDGDINNHLARRWSRSSDSIPRIVSEGAFSSSDTQDIDYQDQTMDELSVPHSFPPSSQISDITEEHEAQRVAHRAESEPPEEHCKEVQCIETNKLRSRRSQEFFQTPEKKTHTDDQKHSESMSNSAENAIKLYACDFEPSFDLEKPETEESLALKRCVVSSRDSALTRSRSCRASFMVIPNSWFDDSASTTPSSETFRYSTRRPEKVRKSLSPDEIADKSTGNAEEDKSTCNAEEETAVNDIGCVTEVKQKTEMNHAPQSSEQHQPKIAKEVATVSLSKWHIDFERKQQEIIELWHDCNVSIVHRTYFFLLFKGDQTDSIYMEVEHRRLSFIKNSLIADGELHATTASSLRNLRHERDMLYRQMVRKLHLAEKERLYGKWGIDMSTKQRRLQLSRRIWTQTGMDHVRESAALVAKLVEHLEKGQAIREMFGLSFSFKPRRSFSWVGVYSRD.

The region spanning 9 to 331 (RIVVSVRLRP…LLFANCAKDV (323 aa)) is the Kinesin motor domain. 95 to 102 (GQTSSGKT) provides a ligand contact to ATP. Residues 340 to 415 (VMSDKALVKH…NFRKVASDGD (76 aa)) adopt a coiled-coil conformation. 2 stretches are compositionally biased toward basic and acidic residues: residues 475–499 (EEHEAQRVAHRAESEPPEEHCKEVQ) and 518–531 (PEKKTHTDDQKHSE). Disordered regions lie at residues 475-532 (EEHE…HSES) and 596-643 (DDSA…STCN). Positions 598–610 (SASTTPSSETFRY) are enriched in polar residues. Positions 613–629 (RRPEKVRKSLSPDEIAD) are enriched in basic and acidic residues.

Belongs to the TRAFAC class myosin-kinesin ATPase superfamily. Kinesin family. KIN-7 subfamily.

This Oryza sativa subsp. japonica (Rice) protein is Kinesin-like protein KIN-7J.